The sequence spans 1174 residues: MPAAVATGVQFGGPPKNKKIVFDDSGEAVVKQNKKEHPQRPKFEGKEQVKKPQKIKFGEDGKAKGAKSFNKNHQKPDFANKPQRIKFGDDGEQVASKSFNQNHKNGPKPQKIKFGEDREAVHQKPFNKNNHKHNGQKSDFANKPQKIKFTDDGEDEVTANSSNTKTEPTKKSQKIKFGDDGESKENFKKPQRIKFDEDGAGKNVSDSDGDSDEELGDSISKKHNKYQSKIDEDEESQKKWYHVHPDYPSTDEVLDMKENDQLELYNLCKNSFEAEKITFNKRNPSDARWLQTALHKGTAKDRANAGALLVTSNPLGNLEALSTLIGFCKISNKASNDVIAVLTDLWQEVLLPPNRKLLAVHTRGADWKKLKKDENLRNEQKRRIYAYWHFESELKDQYHEFLKNVMQGLQTGQEHNKNSSIVSAARLLAYAPEKEQLLLTMLVNKLGDPIAKIASKALHHLSEVAQKHPNMCGVIVAEAEKLLFRNNISERAQHFALCFLSSIAPSGRPEVCTKLVNICFALFKVLVQKGAVNNRTMQAILRCLQKAIVEAKPAKDSNGELLTKEMQDTIYRLVHLADIRVAVQTLGLLLQLVAVKTEKSDRFYNALYVKLLDLNLINVGSKTAAHLLHIVHRAIHIDNHVARAQAFVKRLLQLTLYAPPHIAAGCLIVIHKLLRMRRELIGGTGASEEVEEGSKVVLPISADLDKFGSDDEEVYEDVKDEADDTKDSNPLEEKADNDVKSSASSWHHARVAATEAKVRDIDSCKYDPYHRVPAFAGAAYALRHELLLLRQHYHPTVQVFAEQILQQSRIDYYGDPLRDFGLPHFLERFAFKNPKKLEASQAAENATVAHKRYMAHGARGRPVKSLTKANCTEDEMFIFNFLEHKRRQAEIVAQNKKQKEIKKDAAEEGDDGEAGEEYLKEGEVDDDEFEAYLDGYFGKKFKEGVDEEQDEEELNFLQELGGEIKKDKSKDKKKKKQSDKAEDEMDDIDDDWGDDDLAEDEDDEIEGEDQSDDETGSIDLQPLDDDDDDDDDDDDEGSISEGGPGDSDSSDAPESPDEEDDDDEDAPPRSKKSRKDSTDMVGGRSFAKTLKQSHDMSSLFAAADDFSSLLEETAKVKGQGTSNAVFNKDKSSDKQLKWEENRRSNSKSYKGKKFAGKPAAKGGRPQKAGKKRKH.

Disordered stretches follow at residues 1–20 (MPAAVATGVQFGGPPKNKKI), 29–237 (VVKQ…EESQ), 715–742 (YEDVKDEADDTKDSNPLEEKADNDVKSS), 893–922 (AQNKKQKEIKKDAAEEGDDGEAGEEYLKEG), 944–1085 (GVDE…GGRS), and 1116–1174 (VKGQ…KRKH). The span at 33-63 (NKKEHPQRPKFEGKEQVKKPQKIKFGEDGKA) shows a compositional bias: basic and acidic residues. Residues 95-104 (ASKSFNQNHK) are compositionally biased toward polar residues. 2 stretches are compositionally biased toward basic and acidic residues: residues 113-122 (KFGEDREAVH) and 176-200 (KFGDDGESKENFKKPQRIKFDEDGA). Acidic residues-rich tracts occupy residues 207–216 (SDGDSDEELG) and 715–724 (YEDVKDEADD). Basic and acidic residues-rich tracts occupy residues 725–739 (TKDSNPLEEKADNDV) and 897–906 (KQKEIKKDAA). Composition is skewed to acidic residues over residues 907–916 (EEGDDGEAGE), 945–954 (VDEEQDEEEL), 981–1038 (AEDE…DEGS), and 1048–1065 (DSSDAPESPDEEDDDDED). Residues 1127-1143 (NKDKSSDKQLKWEENRR) show a composition bias toward basic and acidic residues. The span at 1156-1166 (GKPAAKGGRPQ) shows a compositional bias: low complexity.

This sequence belongs to the CBF/MAK21 family.

It is found in the nucleus. Its subcellular location is the nucleolus. Functionally, involved in rRNA processing and ribosome maturation. May also act as a transcription factor. The polypeptide is Nucleolar complex protein 1 (Drosophila melanogaster (Fruit fly)).